Consider the following 432-residue polypeptide: Trigger factor (432 aa).

One can recognise a PPIase FKBP-type domain in the interval 161–246 (EDRVTIDFTG…LKKVEERELP (86 aa)).

It belongs to the FKBP-type PPIase family. Tig subfamily.

It localises to the cytoplasm. The catalysed reaction is [protein]-peptidylproline (omega=180) = [protein]-peptidylproline (omega=0). Involved in protein export. Acts as a chaperone by maintaining the newly synthesized protein in an open conformation. Functions as a peptidyl-prolyl cis-trans isomerase. The chain is Trigger factor from Klebsiella pneumoniae (strain 342).